Here is a 214-residue protein sequence, read N- to C-terminus: Small ribosomal subunit protein uS4c (214 aa).

Basic residues-rich tracts occupy residues 1–14 (MSRYRGPRVKKIKR) and 36–46 (LSRPKPKKKSQ). The segment at 1 to 46 (MSRYRGPRVKKIKRLGSLPGLTTKKPPIVVRDPRKLSRPKPKKKSQ) is disordered. The S4 RNA-binding domain maps to 92–153 (MRLDNTLFRL…KEKSKALIQN (62 aa)).

It belongs to the universal ribosomal protein uS4 family. Part of the 30S ribosomal subunit. Contacts protein S5. The interaction surface between S4 and S5 is involved in control of translational fidelity.

The protein resides in the plastid. Its subcellular location is the chloroplast. One of the primary rRNA binding proteins, it binds directly to 16S rRNA where it nucleates assembly of the body of the 30S subunit. Its function is as follows. With S5 and S12 plays an important role in translational accuracy. The protein is Small ribosomal subunit protein uS4c (rps4) of Pelargonium hortorum (Common geranium).